The primary structure comprises 638 residues: Threonine--tRNA ligase (638 aa).

Positions 1 to 61 constitute a TGS domain; the sequence is MPIITLPDGS…NSDSKVVIIT (61 aa). The segment at 242 to 533 is catalytic; the sequence is DHRKLGKKHS…LIEQYEAKFP (292 aa). Zn(2+) contacts are provided by cysteine 333, histidine 384, and histidine 510.

This sequence belongs to the class-II aminoacyl-tRNA synthetase family. Homodimer. It depends on Zn(2+) as a cofactor.

The protein resides in the cytoplasm. The enzyme catalyses tRNA(Thr) + L-threonine + ATP = L-threonyl-tRNA(Thr) + AMP + diphosphate + H(+). Catalyzes the attachment of threonine to tRNA(Thr) in a two-step reaction: L-threonine is first activated by ATP to form Thr-AMP and then transferred to the acceptor end of tRNA(Thr). Also edits incorrectly charged L-seryl-tRNA(Thr). The chain is Threonine--tRNA ligase from Prochlorococcus marinus (strain MIT 9215).